Consider the following 64-residue polypeptide: Defensin beta 4A (64 aa).

The N-terminal stretch at 1-23 (MRVLYLLFSFLFIFLMPLPGVFG) is a signal peptide. 3 disulfides stabilise this stretch: cysteine 31–cysteine 60, cysteine 38–cysteine 53, and cysteine 43–cysteine 61. Positions 33–48 (KSGAICHPVFCPRRYK) are phosphatidylinositol 4,5-bisphosphate (PIP2) binding.

This sequence belongs to the beta-defensin family. LAP/TAP subfamily. As to quaternary structure, monomer. Homodimer. As to expression, expressed in lung epithelial cells (at protein level). Expressed in foreskin, lung and trachea. Lower expression in kidney, uterus and salivary gland tissue. Expressed in epithelial cells of the respiratory tract, with higher expression in distal parenchyma of the lung, trachea, and tonsils, and lower expression in pharynx and adenoid, and low expression in tongue and larynx.

It localises to the secreted. Exhibits antimicrobial activity against Gram-negative bacteria and Gram-positive bacteria, with highest activity against Gram-negative bacteria. Antimicrobial activity against P.aruginosa seems to be salt-sensitive and is reduced with high salt concentrations greater than 25 mM. Also exhibits antimicrobial activity against the yeast C.albicans. Permeabilizes C.albicans cell membranes via targeting plasma membrane lipid phosphatidylinositol 4,5-bisphosphate (PIP2), thereby leading to cell fragmentation and cell death. Acts as a ligand for C-C chemokine receptor CCR6. Binds to CCR6 and induces chemotactic activity of CCR6-expressing cells, such as immature dendritic cells and memory T cells. This is Defensin beta 4A (DEFB4A) from Homo sapiens (Human).